A 217-amino-acid polypeptide reads, in one-letter code: Probable transaldolase (217 aa).

Residue Lys-84 is the Schiff-base intermediate with substrate of the active site.

Belongs to the transaldolase family. Type 3B subfamily.

It localises to the cytoplasm. The catalysed reaction is D-sedoheptulose 7-phosphate + D-glyceraldehyde 3-phosphate = D-erythrose 4-phosphate + beta-D-fructose 6-phosphate. Its pathway is carbohydrate degradation; pentose phosphate pathway; D-glyceraldehyde 3-phosphate and beta-D-fructose 6-phosphate from D-ribose 5-phosphate and D-xylulose 5-phosphate (non-oxidative stage): step 2/3. Functionally, transaldolase is important for the balance of metabolites in the pentose-phosphate pathway. This Roseiflexus castenholzii (strain DSM 13941 / HLO8) protein is Probable transaldolase.